Reading from the N-terminus, the 1163-residue chain is Integrin alpha-X (1163 aa).

Positions 1 to 19 (MTRTRAALLLFTALATSLG) are cleaved as a signal peptide. Residues 20–1107 (FNLDTEELTA…EKYKVHNPTP (1088 aa)) lie on the Extracellular side of the membrane. FG-GAP repeat units lie at residues 23–78 (DTEE…ACEP) and 79–138 (IGLQ…TQRL). N-linked (GlcNAc...) asparagine glycosylation occurs at Asn61. An intrachain disulfide couples Cys69 to Cys76. The N-linked (GlcNAc...) asparagine glycan is linked to Asn89. Intrachain disulfides connect Cys108-Cys126 and Cys116-Cys145. Positions 157, 159, 161, and 259 each coordinate Mg(2+). The VWFA domain occupies 165 to 339 (RNFATMMNFV…KEKIFAIEGT (175 aa)). FG-GAP repeat units follow at residues 340–391 (ETTS…PTFI), 392–443 (NMSQ…SRQW), 444–504 (RMKA…WRRW), 507–565 (DAVL…PSIS), and 570–630 (QRIA…FIPA). The N-linked (GlcNAc...) asparagine glycan is linked to Asn392. Positions 466, 468, 470, and 474 each coordinate Ca(2+). Cys495 and Cys506 are joined by a disulfide. 7 residues coordinate Ca(2+): Asp530, Asn532, Asp534, Asp538, Asp593, Asp597, and Asp601. Intrachain disulfides connect Cys639/Cys722 and Cys655/Cys712. N-linked (GlcNAc...) asparagine glycans are attached at residues Asn697 and Asn735. Intrachain disulfides connect Cys771/Cys777 and Cys848/Cys863. N-linked (GlcNAc...) asparagine glycans are attached at residues Asn899 and Asn939. Disulfide bonds link Cys998-Cys1022 and Cys1027-Cys1032. Asn1050 is a glycosylation site (N-linked (GlcNAc...) asparagine). Residues 1108-1128 (LIVGSSIGGLLLLALITAVLY) traverse the membrane as a helical segment. The Cytoplasmic segment spans residues 1129–1163 (KVGFFKRQYKEMMEEANGQIAPENGTQTPSPPSEK). The GFFKR motif motif lies at 1131–1135 (GFFKR).

It belongs to the integrin alpha chain family. As to quaternary structure, heterodimer of an alpha and a beta subunit. Alpha-X associates with beta-2. Predominantly expressed in monocytes and granulocytes.

The protein localises to the membrane. Integrin alpha-X/beta-2 is a receptor for fibrinogen. It recognizes the sequence G-P-R in fibrinogen. It mediates cell-cell interaction during inflammatory responses. It is especially important in monocyte adhesion and chemotaxis. The sequence is that of Integrin alpha-X (ITGAX) from Homo sapiens (Human).